A 363-amino-acid polypeptide reads, in one-letter code: MSRIYNFCAGPAMLPAAVMQKAQQELLDWNGLGVSVMEISHRSKEFIALAEQAEVNLRQLMNIPNHYHVLFMHGGGRSQFSNVVNNFLGDHGRALYLVSGQWSQSAVEEAQKLAGEAQIDALNIVTKADGLNQVTLPDLHSIKKDYRYVHYCTNETVDGIEIFDELDSPWPIVADLSSTIMSREIDVSRYGLIYAGAQKNIGPSGLSIVIVRDDMLKLASLPQSSVMDYRIAAENGSMFNTPPTFAWYLAAEVFNWLKGLGGVEVIAQVNQQKAQLLYACIDDNSFYRNGVAKQNRSQMNVTFQLADDSLDSRFLAEAERAGLVALKGHRIVGGMRASLYNAMPLEGVQALVTFMSEFATKHS.

Arginine 42 lines the L-glutamate pocket. Pyridoxal 5'-phosphate is bound by residues glycine 76–arginine 77, tryptophan 102, threonine 156, aspartate 175, and glutamine 198. Lysine 199 carries the post-translational modification N6-(pyridoxal phosphate)lysine. Asparagine 240–threonine 241 lines the pyridoxal 5'-phosphate pocket.

It belongs to the class-V pyridoxal-phosphate-dependent aminotransferase family. SerC subfamily. Homodimer. Pyridoxal 5'-phosphate serves as cofactor.

It is found in the cytoplasm. It catalyses the reaction O-phospho-L-serine + 2-oxoglutarate = 3-phosphooxypyruvate + L-glutamate. The catalysed reaction is 4-(phosphooxy)-L-threonine + 2-oxoglutarate = (R)-3-hydroxy-2-oxo-4-phosphooxybutanoate + L-glutamate. It functions in the pathway amino-acid biosynthesis; L-serine biosynthesis; L-serine from 3-phospho-D-glycerate: step 2/3. It participates in cofactor biosynthesis; pyridoxine 5'-phosphate biosynthesis; pyridoxine 5'-phosphate from D-erythrose 4-phosphate: step 3/5. Functionally, catalyzes the reversible conversion of 3-phosphohydroxypyruvate to phosphoserine and of 3-hydroxy-2-oxo-4-phosphonooxybutanoate to phosphohydroxythreonine. This chain is Phosphoserine aminotransferase, found in Shewanella denitrificans (strain OS217 / ATCC BAA-1090 / DSM 15013).